Consider the following 364-residue polypeptide: Protein leg1a (364 aa).

Positions 1 to 22 are cleaved as a signal peptide; the sequence is MSEMGFLRSVAAVLLLAVFSHA. Residue asparagine 70 is glycosylated (N-linked (GlcNAc...) asparagine).

The protein belongs to the LEG1 family. As to expression, detected in all tissues tested, with the highest levels in serum (at protein level). At mRNA level, only expressed in liver.

The protein localises to the secreted. Important for early development of liver, exocrine pancreas and intestine, probably through cell cycle regulation. In liver, its function is partially redundant with leg1b function. This is Protein leg1a from Danio rerio (Zebrafish).